The chain runs to 284 residues: MKIVLISGLSGSGKSVALRQMEDSGYFCVDNLPLEMLPALVSYHIERADETELAVSVDVRSGIDIGQAREQIASLRGLGHRVEVLFVEAEESVLVRRFSETRRGHPLSNQDMTLLESLKKEREWLFPLKEIAYCIDTSKMNAQQLRHAVRQWLKVERTGLLVILESFGFKYGVPNNADFMFDMRSLPNPYYDPELRPYTGMDKPVWDYLDGQPLVQEMVDDIERFVTHWLPRLEDESRSYVTVAIGCTGGQHRLVYIVEKLARRLKGRYELLIRHRQAQNLSDR.

8 to 15 (GLSGSGKS) provides a ligand contact to ATP. 58–61 (DVRS) provides a ligand contact to GTP.

It belongs to the RapZ-like family.

Displays ATPase and GTPase activities. This chain is Nucleotide-binding protein NMA0948, found in Neisseria meningitidis serogroup A / serotype 4A (strain DSM 15465 / Z2491).